Here is a 914-residue protein sequence, read N- to C-terminus: Golgin candidate 6 (914 aa).

2 coiled-coil regions span residues 723–837 and 863–901; these read IEKQ…SLKG and EDEL…LEDI. Serine 911 is modified (phosphoserine).

It is found in the golgi apparatus. The protein resides in the golgi stack. In terms of biological role, golgi matrix protein playing a role in tethering of vesicles to Golgi membranes and in maintaining the overall structure of the Golgi apparatus. Functions in the anterograde transport of storage protein precursors from the endoplasmic reticulum (ER) to the Golgi complex. This chain is Golgin candidate 6 (GC6), found in Arabidopsis thaliana (Mouse-ear cress).